Reading from the N-terminus, the 63-residue chain is Large ribosomal subunit protein bL32c (63 aa).

The interval 38 to 63 (RSFSGVSEHPKPKGFSRQQTNNRVLG) is disordered. The span at 53-63 (SRQQTNNRVLG) shows a compositional bias: polar residues.

Belongs to the bacterial ribosomal protein bL32 family.

The protein resides in the plastid. The protein localises to the chloroplast. The polypeptide is Large ribosomal subunit protein bL32c (rpl32) (Oryza sativa (Rice)).